The following is a 218-amino-acid chain: uncharacterized protein (218 aa).

Helical transmembrane passes span 10-30, 55-75, 147-167, and 175-195; these read IPPL…SLGI, IGVG…GYSI, VTGG…AGMA, and FSWI…ILLR.

It belongs to the DedA family.

It is found in the cell membrane. This is an uncharacterized protein from Mycobacterium tuberculosis (strain CDC 1551 / Oshkosh).